Reading from the N-terminus, the 933-residue chain is 2-oxoglutarate dehydrogenase E1 component (933 aa).

The protein belongs to the alpha-ketoglutarate dehydrogenase family. In terms of assembly, homodimer. Part of the 2-oxoglutarate dehydrogenase (OGDH) complex composed of E1 (2-oxoglutarate dehydrogenase), E2 (dihydrolipoamide succinyltransferase) and E3 (dihydrolipoamide dehydrogenase); the complex contains multiple copies of the three enzymatic components (E1, E2 and E3). Thiamine diphosphate is required as a cofactor.

It carries out the reaction N(6)-[(R)-lipoyl]-L-lysyl-[protein] + 2-oxoglutarate + H(+) = N(6)-[(R)-S(8)-succinyldihydrolipoyl]-L-lysyl-[protein] + CO2. E1 component of the 2-oxoglutarate dehydrogenase (OGDH) complex which catalyzes the decarboxylation of 2-oxoglutarate, the first step in the conversion of 2-oxoglutarate to succinyl-CoA and CO(2). The protein is 2-oxoglutarate dehydrogenase E1 component of Staphylococcus saprophyticus subsp. saprophyticus (strain ATCC 15305 / DSM 20229 / NCIMB 8711 / NCTC 7292 / S-41).